Reading from the N-terminus, the 170-residue chain is Protein FAM209 (170 aa).

The N-terminal stretch at 1-20 (MRTLLRWCLFLSLCVSCACA) is a signal peptide. A helical transmembrane segment spans residues 56–76 (WLGNKWLWLFVAIMIYVMLKF). The tract at residues 83–107 (KEQHPPGLRGCQLRSPPKKAQNISP) is disordered.

In terms of assembly, interacts with DPY19L2. Interacts with CYLC1; the interaction may be relevant for proper acrosome attachment to the nuclear envelope. Predominately expressed in testis.

Its subcellular location is the nucleus inner membrane. Functionally, required for sperm acrosome biogenesis. This is Protein FAM209 from Mus musculus (Mouse).